A 202-amino-acid chain; its full sequence is MATLIYVDKENGEPGTRVAAKDGLKLGSAPSIKALDGRSQVSTPRFGKTFDAPPALPKATRKALGTVNRATEKSVKTKGPLKQKQPSFSAKKMTEKTVKAKSSVPASDDAYPEIEKFFPFNPLDFESFDLPEEHQIAHLPLSGVPLMILDEERELEKLFQLGPPSPVRMPSPPWESNLLQSPSSILSTLDVELPPVCCDIDI.

At alanine 2 the chain carries N-acetylalanine. Residues 35 to 94 (LDGRSQVSTPRFGKTFDAPPALPKATRKALGTVNRATEKSVKTKGPLKQKQPSFSAKKMT) form a disordered region. Residues 61–64 (RKAL) carry the D-box motif. Short sequence motifs (TEK-box) lie at residues 71–73 (TEK) and 94–96 (TEK). The short motif at 163–173 (PPSPVRMPSPP) is the SH3-binding element. Serine 165 carries the post-translational modification Phosphoserine; by CDK1.

The protein belongs to the securin family. Interacts with RPS10 and DNAJA1. Interacts with the caspase-like ESPL1, and prevents its protease activity probably by covering its active site. Interacts with TP53 and blocks its activity probably by blocking its binding to DNA. Interacts with the Ku 70 kDa subunit of ds-DNA kinase. Interacts with PTTG1IP. In terms of processing, phosphorylated at Ser-165 by CDK1 during mitosis. Post-translationally, phosphorylated in vitro by ds-DNA kinase. Ubiquitinated through 'Lys-11' linkage of ubiquitin moieties by the anaphase promoting complex (APC) at the onset of anaphase, conducting to its degradation. 'Lys-11'-linked ubiquitination is mediated by the E2 ligase UBE2C/UBCH10.

Its subcellular location is the cytoplasm. The protein localises to the nucleus. In terms of biological role, regulatory protein, which plays a central role in chromosome stability, in the p53/TP53 pathway, and DNA repair. Probably acts by blocking the action of key proteins. During the mitosis, it blocks Separase/ESPL1 function, preventing the proteolysis of the cohesin complex and the subsequent segregation of the chromosomes. At the onset of anaphase, it is ubiquitinated, conducting to its destruction and to the liberation of ESPL1. Its function is however not limited to a blocking activity, since it is required to activate ESPL1. Negatively regulates the transcriptional activity and related apoptosis activity of TP53. The negative regulation of TP53 may explain the strong transforming capability of the protein when it is overexpressed. May also play a role in DNA repair via its interaction with Ku, possibly by connecting DNA damage-response pathways with sister chromatid separation. This chain is Securin (PTTG1), found in Gorilla gorilla gorilla (Western lowland gorilla).